A 279-amino-acid polypeptide reads, in one-letter code: Armadillo repeat-containing protein 1 (279 aa).

The stretch at G36–G78 is one ARM repeat. The tract at residues E236–S257 is disordered. A compositionally biased stretch (basic and acidic residues) spans S243–V252.

In terms of assembly, interacts with mitochondrial contact site and cristae organizing system (MICOS) complex components IMMT/MIC60 and MICOS10/MIC10. Interacts with mitochondrial outer membrane sorting assembly machinery (SAM) complex components SAMM50 and MTX1.

The protein localises to the cytoplasm. The protein resides in the mitochondrion. Its subcellular location is the mitochondrion outer membrane. In association with mitochondrial contact site and cristae organizing system (MICOS) complex components and mitochondrial outer membrane sorting assembly machinery (SAM) complex components may regulate mitochondrial dynamics playing a role in determining mitochondrial length, distribution and motility. The polypeptide is Armadillo repeat-containing protein 1 (ARMC1) (Gallus gallus (Chicken)).